A 172-amino-acid chain; its full sequence is 3-hydroxydecanoyl-[acyl-carrier-protein] dehydratase (172 aa).

Histidine 71 is a catalytic residue.

This sequence belongs to the thioester dehydratase family. FabA subfamily. Homodimer.

The protein resides in the cytoplasm. The catalysed reaction is a (3R)-hydroxyacyl-[ACP] = a (2E)-enoyl-[ACP] + H2O. The enzyme catalyses (3R)-hydroxydecanoyl-[ACP] = (2E)-decenoyl-[ACP] + H2O. It catalyses the reaction (2E)-decenoyl-[ACP] = (3Z)-decenoyl-[ACP]. Its pathway is lipid metabolism; fatty acid biosynthesis. Its function is as follows. Necessary for the introduction of cis unsaturation into fatty acids. Catalyzes the dehydration of (3R)-3-hydroxydecanoyl-ACP to E-(2)-decenoyl-ACP and then its isomerization to Z-(3)-decenoyl-ACP. Can catalyze the dehydratase reaction for beta-hydroxyacyl-ACPs with saturated chain lengths up to 16:0, being most active on intermediate chain length. This is 3-hydroxydecanoyl-[acyl-carrier-protein] dehydratase from Salmonella arizonae (strain ATCC BAA-731 / CDC346-86 / RSK2980).